The sequence spans 209 residues: Thiamine-phosphate synthase (209 aa).

Residues 35–39 and Asn67 each bind 4-amino-2-methyl-5-(diphosphooxymethyl)pyrimidine; that span reads QYRDK. Mg(2+)-binding residues include Asp68 and Asp86. Thr105 lines the 4-amino-2-methyl-5-(diphosphooxymethyl)pyrimidine pocket. 132-134 is a 2-[(2R,5Z)-2-carboxy-4-methylthiazol-5(2H)-ylidene]ethyl phosphate binding site; it reads SNT. Lys135 is a 4-amino-2-methyl-5-(diphosphooxymethyl)pyrimidine binding site. Gly162 provides a ligand contact to 2-[(2R,5Z)-2-carboxy-4-methylthiazol-5(2H)-ylidene]ethyl phosphate.

It belongs to the thiamine-phosphate synthase family. The cofactor is Mg(2+).

It carries out the reaction 2-[(2R,5Z)-2-carboxy-4-methylthiazol-5(2H)-ylidene]ethyl phosphate + 4-amino-2-methyl-5-(diphosphooxymethyl)pyrimidine + 2 H(+) = thiamine phosphate + CO2 + diphosphate. The catalysed reaction is 2-(2-carboxy-4-methylthiazol-5-yl)ethyl phosphate + 4-amino-2-methyl-5-(diphosphooxymethyl)pyrimidine + 2 H(+) = thiamine phosphate + CO2 + diphosphate. It catalyses the reaction 4-methyl-5-(2-phosphooxyethyl)-thiazole + 4-amino-2-methyl-5-(diphosphooxymethyl)pyrimidine + H(+) = thiamine phosphate + diphosphate. Its pathway is cofactor biosynthesis; thiamine diphosphate biosynthesis; thiamine phosphate from 4-amino-2-methyl-5-diphosphomethylpyrimidine and 4-methyl-5-(2-phosphoethyl)-thiazole: step 1/1. Condenses 4-methyl-5-(beta-hydroxyethyl)thiazole monophosphate (THZ-P) and 2-methyl-4-amino-5-hydroxymethyl pyrimidine pyrophosphate (HMP-PP) to form thiamine monophosphate (TMP). The polypeptide is Thiamine-phosphate synthase (Pseudomonas fluorescens (strain SBW25)).